The sequence spans 75 residues: UPF0270 protein PSEEN1465 (75 aa).

This sequence belongs to the UPF0270 family.

This chain is UPF0270 protein PSEEN1465, found in Pseudomonas entomophila (strain L48).